We begin with the raw amino-acid sequence, 241 residues long: Uridylate kinase (241 aa).

15–18 (KLSG) contributes to the ATP binding site. Glycine 57 is a UMP binding site. Residues glycine 58 and arginine 62 each contribute to the ATP site. Residues aspartate 77 and 139–146 (IGHTLFTT) contribute to the UMP site. Residues threonine 166, asparagine 167, phenylalanine 172, and aspartate 175 each coordinate ATP.

It belongs to the UMP kinase family. In terms of assembly, homohexamer.

It is found in the cytoplasm. It catalyses the reaction UMP + ATP = UDP + ADP. It functions in the pathway pyrimidine metabolism; CTP biosynthesis via de novo pathway; UDP from UMP (UMPK route): step 1/1. With respect to regulation, inhibited by UTP. Catalyzes the reversible phosphorylation of UMP to UDP. The chain is Uridylate kinase from Wigglesworthia glossinidia brevipalpis.